A 163-amino-acid chain; its full sequence is Nucleotide-binding protein ESA_02876 (163 aa).

Belongs to the YajQ family.

Its function is as follows. Nucleotide-binding protein. The protein is Nucleotide-binding protein ESA_02876 of Cronobacter sakazakii (strain ATCC BAA-894) (Enterobacter sakazakii).